The sequence spans 419 residues: Putative nucleobase-ascorbate transporter 9 (419 aa).

Residues 1–22 (MANGAGNGGGGAGGNGGGGNNG) are compositionally biased toward gly residues. The tract at residues 1–28 (MANGAGNGGGGAGGNGGGGNNGAGNRAE) is disordered. 10 consecutive transmembrane segments (helical) span residues 64–84 (LLSL…MGGG), 91–111 (VIQT…FFGT), 113–133 (LPVI…IIYS), 153–173 (IQGA…LGVW), 184–204 (SIAP…FPLV), 220–240 (GMML…SSGV), 273–293 (SFAM…LFYA), 313–333 (RVIQ…KFGA), 334–354 (FFAS…LCFV), and 370–390 (FNTK…PQYF).

The protein belongs to the nucleobase:cation symporter-2 (NCS2) (TC 2.A.40) family.

The protein resides in the membrane. The chain is Putative nucleobase-ascorbate transporter 9 (NAT9) from Arabidopsis thaliana (Mouse-ear cress).